Here is an 860-residue protein sequence, read N- to C-terminus: Leucine--tRNA ligase (860 aa).

Positions 42–52 match the 'HIGH' region motif; the sequence is PYPSGRLHMGH. Residues 619 to 623 carry the 'KMSKS' region motif; sequence KMSKS. Position 622 (Lys-622) interacts with ATP.

Belongs to the class-I aminoacyl-tRNA synthetase family.

The protein localises to the cytoplasm. The enzyme catalyses tRNA(Leu) + L-leucine + ATP = L-leucyl-tRNA(Leu) + AMP + diphosphate. The polypeptide is Leucine--tRNA ligase (Pectobacterium atrosepticum (strain SCRI 1043 / ATCC BAA-672) (Erwinia carotovora subsp. atroseptica)).